We begin with the raw amino-acid sequence, 41 residues long: Photosystem I reaction center subunit IX (41 aa).

Residues 7–27 (YLSTAPVITAIWLGITAGILI) traverse the membrane as a helical segment.

Belongs to the PsaJ family.

The protein localises to the cellular thylakoid membrane. Its function is as follows. May help in the organization of the PsaE and PsaF subunits. The polypeptide is Photosystem I reaction center subunit IX (Cyanothece sp. (strain PCC 7425 / ATCC 29141)).